Here is a 485-residue protein sequence, read N- to C-terminus: MNNLRVRFAPSPTGAIHIGNIRTALFNYLFSRSEGATFVLRIEDTDLERSSKEFEELIFKELEWLGIEWDEGPDKPGPYGPYRQSERLEIYHKFAQKLIEEKKAYRCYCTPEELEEDRRKAVERGDIPRYSGRCRYLTKEQEEAFIREGRKPVIRFIIPDDEVIEFEDMIKGKITIKSDTLGGDMVIVKSDGMPTYNFAVVIDDALMKITHVIRGEDHIYNTPKQILIYKALGFEIPKFAHAPLILGPDRTKLSKRHGNTYIGQYRELGYLPEAMFNFLSLLSWSPEDNVEIMSKEEIIKKFNFRRIHSANPVFDIEKLNWMNQQYIQKSSIERIVDLAIPHLRRAGYIDGIDDMVYNWLKDVISLYKDGLQYVAQITEKAKMFFVEEVEYSDETVKILNSPNSKIVLEVVKKVIEEADEITEEYVKDLLKKLQKETKVKGKEFFMPIRVAITGEDHGPELVKIIPLLGKDKVINRLKKAINLIK.

Residues 10–20 (PSPTGAIHIGN) carry the 'HIGH' region motif. The 'KMSKS' region signature appears at 252–256 (KLSKR). Position 255 (Lys255) interacts with ATP.

The protein belongs to the class-I aminoacyl-tRNA synthetase family. Glutamate--tRNA ligase type 1 subfamily. As to quaternary structure, monomer.

The protein resides in the cytoplasm. The catalysed reaction is tRNA(Glu) + L-glutamate + ATP = L-glutamyl-tRNA(Glu) + AMP + diphosphate. Functionally, catalyzes the attachment of glutamate to tRNA(Glu) in a two-step reaction: glutamate is first activated by ATP to form Glu-AMP and then transferred to the acceptor end of tRNA(Glu). The protein is Glutamate--tRNA ligase 1 of Thermoanaerobacter sp. (strain X514).